The primary structure comprises 248 residues: Probable succinyl-CoA:3-ketoacid coenzyme A transferase subunit A (248 aa).

A CoA-binding site is contributed by G24–G30.

Belongs to the 3-oxoacid CoA-transferase subunit A family. As to quaternary structure, heterodimer of a subunit A and a subunit B.

The catalysed reaction is a 3-oxo acid + succinyl-CoA = a 3-oxoacyl-CoA + succinate. This chain is Probable succinyl-CoA:3-ketoacid coenzyme A transferase subunit A (scoA), found in Mycobacterium bovis (strain ATCC BAA-935 / AF2122/97).